The following is a 428-amino-acid chain: MRVVILGSGVVGVASAYYLARAGHEVTVIDREAGPALETSFANAGQISPGYAAPWAAPGVPLKAVKWMFEKHAPLAIRLDGTRFQLQWMVQMLRNCTAERYAVNKGRMVRLAEYSRDCLQALRADTGIQYEGRTGGTLQLFRTQQQLDGAAKDIAVLQEANVPFELLSPAELKHAEPALAAVSHKLTGGLRLPGDETGDCQLFTTRLAALAESLGVKFRYNTPIDALAIAGGKIAGVQCGSETVRADAYVVALGSYSTNFISNLMKIPVYPLKGYSITAPIVDAAAAPVSTVLDETYKIAITRFDQRIRVGGMAEIVGFDKTLRAARRETLEMCVNDLFPGGGDTSKATFWTGLRPMTPDGTPIVGRTPVSNLFLNTGHGTLGWTMSCGSGQLLADLISGKKPAIQADDLSVHRYLKDAPGQTRPAYA.

FAD is bound at residue 3–17; that stretch reads VVILGSGVVGVASAY.

Belongs to the DadA oxidoreductase family. It depends on FAD as a cofactor.

It catalyses the reaction a D-alpha-amino acid + A + H2O = a 2-oxocarboxylate + AH2 + NH4(+). Its pathway is amino-acid degradation; D-alanine degradation; NH(3) and pyruvate from D-alanine: step 1/1. Functionally, oxidative deamination of D-amino acids. The chain is D-amino acid dehydrogenase from Burkholderia cenocepacia (strain HI2424).